We begin with the raw amino-acid sequence, 274 residues long: Protein CIMAP1C (274 aa).

The tract at residues 1 to 27 (MKLPKGTRSSVYFAQHPEKEPLPSRQE) is disordered. The segment covering 16–27 (HPEKEPLPSRQE) has biased composition (basic and acidic residues). 2 STPGR repeats span residues 199–224 (PGPT…MAKR) and 235–260 (PGPG…MGIK).

It belongs to the CIMAP family.

In Homo sapiens (Human), this protein is Protein CIMAP1C.